Consider the following 349-residue polypeptide: Hydrophobic dipeptide epimerase (349 aa).

Substrate is bound by residues T127 and 153 to 155 (KIK). Positions 186, 212, and 237 each coordinate Mg(2+). Substrate is bound by residues K259 and 309–311 (DLD).

The protein belongs to the mandelate racemase/muconate lactonizing enzyme family. The cofactor is Mg(2+).

In terms of biological role, catalyzes the epimerization a variety of hydrophobic dipeptides. Epimerase activity is highest with L-Ala-L-Tyr, and lower with L-Ala-L-Met, L-Ala-L-Phe, L-Tyr-L-Ala, L-Tyr-L-Met and L-Tyr-L-Trp (in vitro). The chain is Hydrophobic dipeptide epimerase from Flavobacteria bacterium (strain MS024-2A).